The chain runs to 230 residues: Cytidylate kinase (230 aa).

10-18 is a binding site for ATP; sequence GFSSTGKST.

This sequence belongs to the cytidylate kinase family. Type 1 subfamily.

Its subcellular location is the cytoplasm. The catalysed reaction is CMP + ATP = CDP + ADP. The enzyme catalyses dCMP + ATP = dCDP + ADP. This chain is Cytidylate kinase, found in Flavobacterium johnsoniae (strain ATCC 17061 / DSM 2064 / JCM 8514 / BCRC 14874 / CCUG 350202 / NBRC 14942 / NCIMB 11054 / UW101) (Cytophaga johnsonae).